The primary structure comprises 511 residues: Bifunctional purine biosynthesis protein PurH (511 aa).

The MGS-like domain occupies 1–146 (MARLALLSVS…KNFAHTTVLT (146 aa)).

This sequence belongs to the PurH family.

The enzyme catalyses (6R)-10-formyltetrahydrofolate + 5-amino-1-(5-phospho-beta-D-ribosyl)imidazole-4-carboxamide = 5-formamido-1-(5-phospho-D-ribosyl)imidazole-4-carboxamide + (6S)-5,6,7,8-tetrahydrofolate. It catalyses the reaction IMP + H2O = 5-formamido-1-(5-phospho-D-ribosyl)imidazole-4-carboxamide. It participates in purine metabolism; IMP biosynthesis via de novo pathway; 5-formamido-1-(5-phospho-D-ribosyl)imidazole-4-carboxamide from 5-amino-1-(5-phospho-D-ribosyl)imidazole-4-carboxamide (10-formyl THF route): step 1/1. The protein operates within purine metabolism; IMP biosynthesis via de novo pathway; IMP from 5-formamido-1-(5-phospho-D-ribosyl)imidazole-4-carboxamide: step 1/1. The protein is Bifunctional purine biosynthesis protein PurH of Synechocystis sp. (strain ATCC 27184 / PCC 6803 / Kazusa).